Reading from the N-terminus, the 107-residue chain is Protein HitA (107 aa).

The HIT domain maps to 5-107 (IFCKIAAKEI…LHIHIMGTPV (103 aa)). The Histidine triad motif motif lies at 97–101 (HLHIH).

This Neisseria gonorrhoeae protein is Protein HitA (hitA).